A 261-amino-acid polypeptide reads, in one-letter code: Receptor expression-enhancing protein 4 (261 aa).

The next 2 membrane-spanning stretches (helical) occupy residues 1-21 (MVSW…YPAY) and 35-55 (YVRW…ETFT). Positions 167-261 (YTDALYPDEP…KKPAQSEPEN (95 aa)) are disordered. The span at 221–230 (KSLQRSQSLR) shows a compositional bias: polar residues.

Belongs to the DP1 family. Interacts with microtubules. In terms of tissue distribution, during gastrulation, expressed on the dorsal side of the embryo and then in the neural plate and neural tube. At tailbud stages, expressed in the somites, neural tube and otic vesicle.

Its subcellular location is the endoplasmic reticulum membrane. Functionally, microtubule-binding protein required to ensure proper cell division and nuclear envelope reassembly by sequestering the endoplasmic reticulum away from chromosomes during mitosis. Probably acts by clearing the endoplasmic reticulum membrane from metaphase chromosomes. May play a role in the maintenance of both the nervous system and the musculature. In Xenopus laevis (African clawed frog), this protein is Receptor expression-enhancing protein 4 (reep4).